The chain runs to 29 residues: Cycloviolacin-O21 (29 aa).

Residues 1–29 (GLPVCGETCVTGSCYTPGCTCSWPVCTRN) constitute a cross-link (cyclopeptide (Gly-Asn)). 3 disulfides stabilise this stretch: C5–C19, C9–C21, and C14–C26.

In terms of processing, this is a cyclic peptide. As to expression, expressed in leaves, petals, petioles, and runners but not in roots (at protein level).

Probably participates in a plant defense mechanism. This Viola odorata (Sweet violet) protein is Cycloviolacin-O21.